A 415-amino-acid chain; its full sequence is Actin-like protein 7B (415 aa).

The tract at residues 1-35 is disordered; the sequence is MATRNSPMALGTAQGDPGEAGTRPGSDAGLRDTGA. Residue Ser6 is modified to Phosphoserine.

The protein belongs to the actin family.

The protein localises to the cytoplasm. It is found in the cytoskeleton. This Macaca fascicularis (Crab-eating macaque) protein is Actin-like protein 7B (ACTL7B).